A 369-amino-acid chain; its full sequence is NAD(P)H-quinone oxidoreductase subunit 1, chloroplastic (369 aa).

8 consecutive transmembrane segments (helical) span residues 29–49 (IWIIVSILTTIVGVTLGVLVI), 97–117 (IWLFNVGPAIVVIPVFLSYLV), 129–149 (LGIGVFFWIAVSSIAPLGLLM), 167–187 (AAQSISYEIPLALCVLSISLL), 205–225 (LLGWNLWRQPIGFLIFFISSL), 255–275 (FGLFYVGSYLNLLVSSLFVTV), 305–325 (IINAIIGIIITLTKAYLFLFV), and 348–368 (FLLPVALGNLLLTASFQILLL).

The protein belongs to the complex I subunit 1 family. As to quaternary structure, NDH is composed of at least 16 different subunits, 5 of which are encoded in the nucleus.

The protein resides in the plastid. Its subcellular location is the chloroplast thylakoid membrane. The catalysed reaction is a plastoquinone + NADH + (n+1) H(+)(in) = a plastoquinol + NAD(+) + n H(+)(out). It catalyses the reaction a plastoquinone + NADPH + (n+1) H(+)(in) = a plastoquinol + NADP(+) + n H(+)(out). Functionally, NDH shuttles electrons from NAD(P)H:plastoquinone, via FMN and iron-sulfur (Fe-S) centers, to quinones in the photosynthetic chain and possibly in a chloroplast respiratory chain. The immediate electron acceptor for the enzyme in this species is believed to be plastoquinone. Couples the redox reaction to proton translocation, and thus conserves the redox energy in a proton gradient. This Angiopteris evecta (Mule's foot fern) protein is NAD(P)H-quinone oxidoreductase subunit 1, chloroplastic.